A 514-amino-acid chain; its full sequence is MKLLTDWLVLDGCSLAVDDLVAVARGGVPVRLSPASLELVRRSRAFVEALLEGDEIVYGITTGFGYFKNRRIPRSAVEQLQQNLLMSSAAGLGEPFGREVVRAMLLLRANTLAQGYSGVRPETLQLLVAMLNRGVHPVVPCRGSVGASGDLAPLAHLALVLTGEGEAEVGGEVLPGAAALARAGLEPIRLGAKEGLALINGTQAMSALGALTVHRAQRLAKLADLACAMTLEATLGSRSAFLPHFHRLRPHPGQQSSARNLLVLTEDSALIASHAGCDRVQDAYSLRCAPQVHGASLDAISYAAGVIAIEINSVTDNPLIFADTGQVVTGGHFHGQPVAMASDVLAIALAELADISERRTERLVNADYSNGLPMFLTEAGGLHSGYMVAQYTAASLVSENKVLAHPACVDSIPTSAGQEDHVSMGLTAARKAVTVCDNCERVIAIELMCAAQALDLRGKLTPGRGSRVGLEVIRAAVPHLESDRIVSRDIEKVVELMADGHLLEAVEAACGRLD.

Residues 147–149 (ASG) constitute a cross-link (5-imidazolinone (Ala-Gly)). Ser148 bears the 2,3-didehydroalanine (Ser) mark.

Belongs to the PAL/histidase family. In terms of processing, contains an active site 4-methylidene-imidazol-5-one (MIO), which is formed autocatalytically by cyclization and dehydration of residues Ala-Ser-Gly.

It is found in the cytoplasm. The catalysed reaction is L-histidine = trans-urocanate + NH4(+). The protein operates within amino-acid degradation; L-histidine degradation into L-glutamate; N-formimidoyl-L-glutamate from L-histidine: step 1/3. This is Histidine ammonia-lyase from Gloeobacter violaceus (strain ATCC 29082 / PCC 7421).